Consider the following 195-residue polypeptide: Thymidine kinase (195 aa).

ATP-binding positions include Gly-15–Thr-22 and Asp-91–Asn-94. The active-site Proton acceptor is the Glu-92. Zn(2+) is bound by residues Cys-148, Cys-151, Cys-186, and Cys-189.

The protein belongs to the thymidine kinase family. Homotetramer.

It localises to the cytoplasm. The enzyme catalyses thymidine + ATP = dTMP + ADP + H(+). The protein is Thymidine kinase of Halobacterium salinarum (strain ATCC 29341 / DSM 671 / R1).